Consider the following 126-residue polypeptide: Acidic phospholipase A2 S1E6-a (126 aa).

The signal sequence occupies residues 1–3; sequence VEG. 7 disulfide bridges follow: Cys-29–Cys-119, Cys-31–Cys-47, Cys-46–Cys-98, Cys-52–Cys-126, Cys-53–Cys-91, Cys-60–Cys-84, and Cys-78–Cys-89. Residues Tyr-30, Gly-32, and Gly-34 each coordinate Ca(2+). His-50 is an active-site residue. Position 51 (Asp-51) interacts with Ca(2+). Residue Asp-92 is part of the active site.

In terms of assembly, homodimer. Requires Ca(2+) as cofactor. In terms of tissue distribution, expressed by the venom gland.

It is found in the secreted. The catalysed reaction is a 1,2-diacyl-sn-glycero-3-phosphocholine + H2O = a 1-acyl-sn-glycero-3-phosphocholine + a fatty acid + H(+). Its function is as follows. Snake venom phospholipase A2 (PLA2) that inhibits ADP-induced platelet aggregation. PLA2 catalyzes the calcium-dependent hydrolysis of the 2-acyl groups in 3-sn-phosphoglycerides. The chain is Acidic phospholipase A2 S1E6-a from Calloselasma rhodostoma (Malayan pit viper).